The following is a 1548-amino-acid chain: Zinc finger MYM-type protein 4 (1548 aa).

A2 carries the N-acetylalanine modification. The residue at position 107 (T107) is a Phosphothreonine. A phosphoserine mark is found at S110 and S122. Residues K140 and K149 each participate in a glycyl lysine isopeptide (Lys-Gly) (interchain with G-Cter in SUMO2) cross-link. S162 bears the Phosphoserine mark. The interval 162 to 189 (SKETFSGKEKNRDLTYEREKRLDKPHKD) is disordered. K195 participates in a covalent cross-link: Glycyl lysine isopeptide (Lys-Gly) (interchain with G-Cter in SUMO2). S197 carries the phosphoserine modification. Residues K201 and K232 each participate in a glycyl lysine isopeptide (Lys-Gly) (interchain with G-Cter in SUMO2) cross-link. The residue at position 242 (S242) is a Phosphoserine. K250 participates in a covalent cross-link: Glycyl lysine isopeptide (Lys-Gly) (interchain with G-Cter in SUMO1); alternate. K250 is covalently cross-linked (Glycyl lysine isopeptide (Lys-Gly) (interchain with G-Cter in SUMO2); alternate). Glycyl lysine isopeptide (Lys-Gly) (interchain with G-Cter in SUMO2) cross-links involve residues K260, K271, K273, K289, K327, K400, K428, and K430. MYM-type zinc fingers lie at residues 362–402 (QLFC…PKDV), 414–457 (KDFC…RHEV), 464–499 (HKLC…GSGQ), 510–544 (KKFC…AEMI), 554–592 (ELFC…QYHL), 600–631 (RNFC…LSQG), 708–742 (FQFC…KETV), 749–788 (KSFC…LVQN), and 795–829 (EEFC…SESL). S1030 bears the Phosphoserine mark. Glycyl lysine isopeptide (Lys-Gly) (interchain with G-Cter in SUMO2) cross-links involve residues K1035 and K1061. S1064 and S1071 each carry phosphoserine. Residues K1080 and K1127 each participate in a glycyl lysine isopeptide (Lys-Gly) (interchain with G-Cter in SUMO2) cross-link. Basic and acidic residues predominate over residues 1124-1134 (SELKQFSKGET). 2 disordered regions span residues 1124–1183 (SELK…KSIV) and 1231–1260 (KCGG…QESS). Residues 1160–1181 (SRTRRRHRDGFPQPRRRGRKKS) are compositionally biased toward basic residues. 2 positions are modified to phosphoserine: S1181 and S1256. Positions 1237 to 1260 (QASSSPRSDPLGSTQDHALSQESS) are enriched in polar residues. Residue K1431 forms a Glycyl lysine isopeptide (Lys-Gly) (interchain with G-Cter in SUMO2) linkage. Residues S1539, S1542, and S1547 each carry the phosphoserine modification.

Expressed at higher level in heart, skeletal muscle, kidney and liver.

Its function is as follows. Plays a role in the regulation of cell morphology and cytoskeletal organization. This Homo sapiens (Human) protein is Zinc finger MYM-type protein 4 (ZMYM4).